Here is a 187-residue protein sequence, read N- to C-terminus: Casparian strip membrane protein 5 (187 aa).

Over 1–24 the chain is Cytoplasmic; that stretch reads MKSGQAEIMETSKGIQKSGLMSRR. Residues 25–45 form a helical membrane-spanning segment; it reads IAILEFILRIVAFFNTIGSAI. Topologically, residues 46–74 are extracellular; sequence LMGTTHETLPFFTQFIRFQAEYNDLPALT. Residues 75-95 form a helical membrane-spanning segment; the sequence is FFVVANAVVSGYLILSLTLAF. At 96-107 the chain is on the cytoplasmic side; sequence VHIVKRKTQNTR. A helical membrane pass occupies residues 108–128; that stretch reads ILLIILDVAMLGLLTSGASSA. Residues 129-161 are Extracellular-facing; it reads AAIVYLAHNGNNKTNWFAICQQFNSFCERISGS. A glycan (N-linked (GlcNAc...) asparagine) is linked at asparagine 140. A helical membrane pass occupies residues 162 to 182; it reads LIGSFIAIVLLILLILLSAIA. The Cytoplasmic portion of the chain corresponds to 183–187; that stretch reads LSRRH.

The protein belongs to the Casparian strip membrane proteins (CASP) family. In terms of assembly, homodimer and heterodimers with other CASP proteins. Interacts with CASP1, CASP3 and CASP4.

The protein resides in the cell membrane. Functionally, regulates membrane-cell wall junctions and localized cell wall deposition. Required for establishment of the Casparian strip membrane domain (CSD) and the subsequent formation of Casparian strips, a cell wall modification of the root endodermis that determines an apoplastic barrier between the intraorganismal apoplasm and the extraorganismal apoplasm and prevents lateral diffusion. The chain is Casparian strip membrane protein 5 (CASP5) from Arabidopsis thaliana (Mouse-ear cress).